The sequence spans 110 residues: NADH-quinone oxidoreductase subunit K (110 aa).

Helical transmembrane passes span 7–27 (LGSYLLVGAMLFCLGLYGVFV), 31–51 (IIAILMSIELMLNAVNINFIA), and 73–93 (IFVIVVAAAEIAVGLALVIAI).

It belongs to the complex I subunit 4L family. In terms of assembly, NDH-1 is composed of 14 different subunits. Subunits NuoA, H, J, K, L, M, N constitute the membrane sector of the complex.

Its subcellular location is the cell membrane. The catalysed reaction is a quinone + NADH + 5 H(+)(in) = a quinol + NAD(+) + 4 H(+)(out). NDH-1 shuttles electrons from NADH, via FMN and iron-sulfur (Fe-S) centers, to quinones in the respiratory chain. The immediate electron acceptor for the enzyme in this species is believed to be a menaquinone. Couples the redox reaction to proton translocation (for every two electrons transferred, four hydrogen ions are translocated across the cytoplasmic membrane), and thus conserves the redox energy in a proton gradient. This Desulfitobacterium hafniense (strain DSM 10664 / DCB-2) protein is NADH-quinone oxidoreductase subunit K.